Consider the following 1022-residue polypeptide: Probable beta-galactosidase B (1022 aa).

The signal sequence occupies residues 1-20 (MARFPQLLFLLLASIGLLSA). Asn-23 carries an N-linked (GlcNAc...) asparagine glycan. A substrate-binding site is contributed by Tyr-90. N-linked (GlcNAc...) asparagine glycosylation is present at Asn-100. The substrate site is built by Asn-135, Ala-136, Glu-137, and Asn-195. Residue Glu-196 is the Proton donor of the active site. Residue Asn-211 is glycosylated (N-linked (GlcNAc...) asparagine). A substrate-binding site is contributed by Tyr-265. A disulfide bond links Cys-271 and Cys-324. The active-site Nucleophile is the Glu-308. Tyr-373 is a binding site for substrate. N-linked (GlcNAc...) asparagine glycosylation is found at Asn-411, Asn-456, Asn-541, Asn-554, Asn-626, Asn-777, Asn-790, Asn-832, Asn-880, and Asn-881.

This sequence belongs to the glycosyl hydrolase 35 family.

It localises to the secreted. The enzyme catalyses Hydrolysis of terminal non-reducing beta-D-galactose residues in beta-D-galactosides.. Its function is as follows. Cleaves beta-linked terminal galactosyl residues from gangliosides, glycoproteins, and glycosaminoglycans. This chain is Probable beta-galactosidase B (lacB), found in Aspergillus terreus (strain NIH 2624 / FGSC A1156).